The chain runs to 1262 residues: Protein stoned-B (1262 aa).

4 short sequence motifs (NPF) span residues Asn-3 to Phe-5, Asn-19 to Phe-21, Asn-33 to Phe-35, and Asn-43 to Phe-45. The disordered stretch occupies residues Ala-17 to Met-36. The tract at residues Ala-49–Ala-189 is disordered. Over residues Asp-50–Ala-60 the composition is skewed to acidic residues. The segment covering Pro-101–His-111 has biased composition (low complexity). The span at His-115–Pro-124 shows a compositional bias: pro residues. Polar residues predominate over residues Thr-128–Glu-145. Low complexity predominate over residues Asp-172–Ala-189. The NPF 5 motif lies at Asn-210–Phe-212. Disordered stretches follow at residues Val-225 to Thr-452 and Glu-474 to Pro-507. Positions Lys-233 to Ala-272 are enriched in pro residues. The span at Asp-325–Gln-345 shows a compositional bias: acidic residues. The span at Gln-384–Thr-401 shows a compositional bias: polar residues. Positions Asp-417–Glu-429 are enriched in acidic residues. The short motif at Asn-493–Phe-495 is the NPF 6 element. A phosphoserine mark is found at Ser-623 and Ser-626. The tract at residues Ser-643–Asp-709 is disordered. The short motif at Asn-673–Phe-675 is the NPF 7 element. The 175-residue stretch at Gly-728–Leu-902 folds into the SHD domain. Positions Lys-847–Val-1108 are interaction with Syt. The 314-residue stretch at Met-906–Glu-1219 folds into the MHD domain. The segment at Thr-1226–Asn-1262 is disordered. Residues Pro-1241–Pro-1254 show a composition bias toward low complexity.

This sequence belongs to the Stoned B family. As to quaternary structure, interacts with the second C2 domain of Syt.

It is found in the cytoplasm. The protein localises to the synapse. Its function is as follows. Adapter protein involved in endocytic recycling of synaptic vesicles membranes. May act by mediating the retrieval of synaptotagmin protein Syt from the plasma membrane, thereby facilitating the internalization of multiple synaptic vesicles from the plasma membrane. In Drosophila melanogaster (Fruit fly), this protein is Protein stoned-B (stnB).